We begin with the raw amino-acid sequence, 122 residues long: Large ribosomal subunit protein bL19 (122 aa).

It belongs to the bacterial ribosomal protein bL19 family.

Functionally, this protein is located at the 30S-50S ribosomal subunit interface and may play a role in the structure and function of the aminoacyl-tRNA binding site. The chain is Large ribosomal subunit protein bL19 from Prosthecochloris aestuarii (strain DSM 271 / SK 413).